The sequence spans 126 residues: Fatty acid-binding protein 10-A, liver basic (126 aa).

Cholate is bound by residues Lys57, Lys77, His99, and Gln101.

The protein belongs to the calycin superfamily. Fatty-acid binding protein (FABP) family. Expressed in the developing embryonic liver from 48 hpf. Also expressed in the liver of 5-day-old larvae. In adults, primarily expressed in the liver, with weak expression in the testis and intestine.

The protein localises to the cytoplasm. Functionally, binds hydrophobic ligands, such as cholate, in the cytoplasm. May be involved in intracellular lipid transport. Binds one cholate per subunit. The polypeptide is Fatty acid-binding protein 10-A, liver basic (fabp10a) (Danio rerio (Zebrafish)).